Here is a 492-residue protein sequence, read N- to C-terminus: Steroid 21-hydroxylase (492 aa).

Residues R91 and K120 each contribute to the heme b site. R231 serves as a coordination point for 17alpha-hydroxyprogesterone. Position 231 (R231) interacts with progesterone. H363, R424, and C426 together coordinate heme b.

Belongs to the cytochrome P450 family. The cofactor is heme b.

It is found in the endoplasmic reticulum membrane. The protein resides in the microsome membrane. It carries out the reaction 17alpha-hydroxyprogesterone + reduced [NADPH--hemoprotein reductase] + O2 = 11-deoxycortisol + oxidized [NADPH--hemoprotein reductase] + H2O + H(+). It catalyses the reaction progesterone + reduced [NADPH--hemoprotein reductase] + O2 = 21-hydroxyprogesterone + oxidized [NADPH--hemoprotein reductase] + H2O + H(+). Specifically catalyzes the 21-hydroxylation of steroids. Required for the adrenal synthesis of mineralocorticoids and glucocorticoids. The chain is Steroid 21-hydroxylase (CYP21) from Lynx lynx (Eurasian lynx).